The sequence spans 297 residues: Cell division protein ZipA (297 aa).

Position 1 (methionine 1) is a topological domain, periplasmic. The helical transmembrane segment at 2-22 (EIGLREWLILIGIIVIAGILF) threads the bilayer. Residues 23–297 (DGWRRMRGGK…FERRALTQKR (275 aa)) are Cytoplasmic-facing. Residues 48-150 (DEEGGSAEVL…GAAPASSSVK (103 aa)) are disordered. Basic and acidic residues predominate over residues 83–92 (ARDREREPKP). The segment covering 124-133 (LFADSDDDFA) has biased composition (acidic residues). Over residues 136 to 149 (NNRSSGAAPASSSV) the composition is skewed to polar residues.

It belongs to the ZipA family. In terms of assembly, interacts with FtsZ via their C-terminal domains.

It localises to the cell inner membrane. Functionally, essential cell division protein that stabilizes the FtsZ protofilaments by cross-linking them and that serves as a cytoplasmic membrane anchor for the Z ring. Also required for the recruitment to the septal ring of downstream cell division proteins. This chain is Cell division protein ZipA, found in Pseudomonas putida (strain ATCC 700007 / DSM 6899 / JCM 31910 / BCRC 17059 / LMG 24140 / F1).